We begin with the raw amino-acid sequence, 890 residues long: Kinesin-like protein KIF20A (890 aa).

Ser2 bears the N-acetylserine mark. Phosphoserine is present on residues Ser7, Ser14, and Ser21. The Kinesin motor domain occupies 64 to 507; sequence KVKVYLRVRP…AKFSAIASQL (444 aa). 160 to 167 is an ATP binding site; sequence GVTNSGKT. Phosphoserine; by PLK1 is present on Ser528. 5 positions are modified to phosphoserine: Ser532, Ser662, Ser668, Ser685, and Ser825. The stretch at 611–762 forms a coiled coil; it reads LDTQKELLEE…ESLQSAERAC (152 aa). The segment at 763–890 is globular; that stretch reads CHSTGAGKLR…LKSGPFGKKY (128 aa). The tract at residues 832–865 is disordered; it reads TNQENQQPNQQPPGKKPFLRNLLPRTPTCQSSTD. Thr857 carries the post-translational modification Phosphothreonine. A phosphoserine mark is found at Ser867, Ser878, and Ser883.

This sequence belongs to the TRAFAC class myosin-kinesin ATPase superfamily. Kinesin family. In terms of processing, phosphorylated by PLK1 at Ser-528 during mitosis, creating a docking site for PLK1 and recruiting PLK1 at central spindle.

Its subcellular location is the golgi apparatus. The protein resides in the cytoplasm. It is found in the cytoskeleton. It localises to the spindle. Its function is as follows. Mitotic kinesin required for chromosome passenger complex (CPC)-mediated cytokinesis. Following phosphorylation by PLK1, involved in recruitment of PLK1 to the central spindle. Interacts with guanosine triphosphate (GTP)-bound forms of RAB6A and RAB6B. May act as a motor required for the retrograde RAB6 regulated transport of Golgi membranes and associated vesicles along microtubules. Has a microtubule plus end-directed motility. The chain is Kinesin-like protein KIF20A (KIF20A) from Homo sapiens (Human).